The chain runs to 355 residues: Elongation factor Ts (355 aa).

The involved in Mg(2+) ion dislocation from EF-Tu stretch occupies residues 82-85; that stretch reads TDFV.

Belongs to the EF-Ts family.

It is found in the cytoplasm. In terms of biological role, associates with the EF-Tu.GDP complex and induces the exchange of GDP to GTP. It remains bound to the aminoacyl-tRNA.EF-Tu.GTP complex up to the GTP hydrolysis stage on the ribosome. This Wolinella succinogenes (strain ATCC 29543 / DSM 1740 / CCUG 13145 / JCM 31913 / LMG 7466 / NCTC 11488 / FDC 602W) (Vibrio succinogenes) protein is Elongation factor Ts.